The following is a 211-amino-acid chain: Pyridoxine/pyridoxamine 5'-phosphate oxidase (211 aa).

Substrate is bound by residues 7-10 (RREY) and Lys65. FMN contacts are provided by residues 60–65 (RIVLLK), 75–76 (YT), Arg81, Lys82, and Gln104. Residues Tyr122, Arg126, and Ser130 each contribute to the substrate site. FMN-binding positions include 139–140 (QS) and Trp184. Position 190 to 192 (190 to 192 (RLH)) interacts with substrate. Residue Arg194 participates in FMN binding.

Belongs to the pyridoxamine 5'-phosphate oxidase family. In terms of assembly, homodimer. The cofactor is FMN.

It catalyses the reaction pyridoxamine 5'-phosphate + O2 + H2O = pyridoxal 5'-phosphate + H2O2 + NH4(+). The catalysed reaction is pyridoxine 5'-phosphate + O2 = pyridoxal 5'-phosphate + H2O2. It participates in cofactor metabolism; pyridoxal 5'-phosphate salvage; pyridoxal 5'-phosphate from pyridoxamine 5'-phosphate: step 1/1. The protein operates within cofactor metabolism; pyridoxal 5'-phosphate salvage; pyridoxal 5'-phosphate from pyridoxine 5'-phosphate: step 1/1. Functionally, catalyzes the oxidation of either pyridoxine 5'-phosphate (PNP) or pyridoxamine 5'-phosphate (PMP) into pyridoxal 5'-phosphate (PLP). This Vibrio cholerae serotype O1 (strain ATCC 39541 / Classical Ogawa 395 / O395) protein is Pyridoxine/pyridoxamine 5'-phosphate oxidase.